The following is a 378-amino-acid chain: MRASFFWLLPLLLILASVAQGQPTRPKPGIRRKPKPRPTPRFPQAPEPAEPTDLPPPLPPGPPSVFPDCPRECYCPPDFPSALYCDSRNLRRVPVIPPRIHYLYLQNNFITELPLESFQNATGLRWVNLDNNRIRKVDQRVLGKLPSLAFLYMEKNQLEEVPSALPRNLEQLRLSQNLISRIPPGVFSKLENLLLLDLQHNRLSDGVFKADTFQGLKNLMQLNLAHNILRKMPPKVPQAIHQLYLDSNKIETIPNGYFKDFPNLAFIRMNYNKLSDRGLPKNSFNISNLLVLHLSHNKISNVPAISNKLEHLYLNNNSIEKINGTQICPNNLVAFHDFSSDLENVPHLRYLRLDGNFLKPPIPLDLMMCFRLLQSVVI.

Residues Met1–Gly21 form the signal peptide. The disordered stretch occupies residues Gln22–Pro62. Residues Pro28–Pro38 are compositionally biased toward basic residues. Positions Thr39–Pro62 are enriched in pro residues. LRR repeat units follow at residues Arg91–Ile110, Thr111–Ile134, Arg135–Leu158, Glu159–Ile179, Ser180–Leu203, Ser204–Leu229, Arg230–Ile250, Glu251–Leu274, Ser275–Ile299, Ser300–Ile319, Glu320–Leu358, and Lys359–Ile378. N-linked (GlcNAc...) asparagine glycosylation is present at Asn120. Residues Asn285, Asn316, and Asn323 are each glycosylated (N-linked (GlcNAc...) asparagine). Cys328 and Cys369 are oxidised to a cystine.

It belongs to the small leucine-rich proteoglycan (SLRP) family. SLRP class II subfamily. In terms of assembly, binds the basement membrane heparan sulfate proteoglycan perlecan and triple helical collagens type I and type II. In terms of processing, glycosylated; contains heparan sulfate. Expressed in cartilage throughout both fetal development and postnatal life. It is also expressed in the developing embryo prior to skeletogenesis. In adult, highest expression in lung, lower levels in cardiac and skeletal muscle.

The protein localises to the secreted. Its subcellular location is the extracellular space. It localises to the extracellular matrix. Functionally, may anchor basement membranes to the underlying connective tissue. In Mus musculus (Mouse), this protein is Prolargin (Prelp).